The chain runs to 165 residues: MNYYTTAETPLGELIIAEEEDRITRLFLSQEDWVDWKETVQNTEHKETPNLAEAKQQLQEYFAGERKTFSLPLSQKGTPFQQKVWQALERIPYGESRSYADIAAAVGSPKAVRAVGQANKRNDLPIFVPCHRVIGKNSALTGYAGSKTEIKAFLLNIERISYKEK.

Catalysis depends on Cys-130, which acts as the Nucleophile; methyl group acceptor.

It belongs to the MGMT family.

The protein localises to the cytoplasm. The enzyme catalyses a 6-O-methyl-2'-deoxyguanosine in DNA + L-cysteinyl-[protein] = S-methyl-L-cysteinyl-[protein] + a 2'-deoxyguanosine in DNA. It carries out the reaction a 4-O-methyl-thymidine in DNA + L-cysteinyl-[protein] = a thymidine in DNA + S-methyl-L-cysteinyl-[protein]. Its function is as follows. Involved in the cellular defense against the biological effects of O6-methylguanine (O6-MeG) and O4-methylthymine (O4-MeT) in DNA. Repairs the methylated nucleobase in DNA by stoichiometrically transferring the methyl group to a cysteine residue in the enzyme. This is a suicide reaction: the enzyme is irreversibly inactivated. The protein is Methylated-DNA--protein-cysteine methyltransferase, constitutive of Bacillus subtilis (strain 168).